The primary structure comprises 58 residues: Small ribosomal subunit protein uS14 (58 aa).

The interval 1-21 is disordered; sequence MSESETEQTGEHASHRTGQTH. Over residues 9–21 the composition is skewed to basic and acidic residues; it reads TGEHASHRTGQTH. The Zn(2+) site is built by cysteine 23, cysteine 26, cysteine 41, and cysteine 44.

Belongs to the universal ribosomal protein uS14 family. Zinc-binding uS14 subfamily. In terms of assembly, part of the 30S ribosomal subunit. The cofactor is Zn(2+).

Binds 16S rRNA, required for the assembly of 30S particles. This chain is Small ribosomal subunit protein uS14, found in Haloquadratum walsbyi (strain DSM 16790 / HBSQ001).